Consider the following 357-residue polypeptide: DNA polymerase IV 2 (357 aa).

Residues 4–184 form the UmuC domain; it reads IIHVDMDAFY…LAVKKFHGVG (181 aa). Residues D8 and D102 each contribute to the Mg(2+) site. Residue E103 is part of the active site.

It belongs to the DNA polymerase type-Y family. In terms of assembly, monomer. It depends on Mg(2+) as a cofactor.

The protein localises to the cytoplasm. It catalyses the reaction DNA(n) + a 2'-deoxyribonucleoside 5'-triphosphate = DNA(n+1) + diphosphate. Its function is as follows. Poorly processive, error-prone DNA polymerase involved in untargeted mutagenesis. Copies undamaged DNA at stalled replication forks, which arise in vivo from mismatched or misaligned primer ends. These misaligned primers can be extended by PolIV. Exhibits no 3'-5' exonuclease (proofreading) activity. May be involved in translesional synthesis, in conjunction with the beta clamp from PolIII. The sequence is that of DNA polymerase IV 2 (dinB2) from Agrobacterium fabrum (strain C58 / ATCC 33970) (Agrobacterium tumefaciens (strain C58)).